The following is a 370-amino-acid chain: Peptide chain release factor 2 (370 aa).

Glutamine 249 bears the N5-methylglutamine mark.

The protein belongs to the prokaryotic/mitochondrial release factor family. Methylated by PrmC. Methylation increases the termination efficiency of RF2.

The protein resides in the cytoplasm. In terms of biological role, peptide chain release factor 2 directs the termination of translation in response to the peptide chain termination codons UGA and UAA. In Kosmotoga olearia (strain ATCC BAA-1733 / DSM 21960 / TBF 19.5.1), this protein is Peptide chain release factor 2.